The primary structure comprises 273 residues: Nicotinamide N-methyltransferase (273 aa).

S-adenosyl-L-methionine is bound by residues Tyr35, Tyr40, 74–75 (GA), Tyr80, Asp96, Asn101, and 152–153 (NV).

It belongs to the class I-like SAM-binding methyltransferase superfamily. NNMT/PNMT/TEMT family.

It catalyses the reaction nicotinamide + S-adenosyl-L-methionine = 1-methylnicotinamide + S-adenosyl-L-homocysteine. In terms of biological role, catalyzes the N-methylation of nicotinamide and other pyridines to form pyridinium ions. Involved in regulation of lifespan extension downstream of the sirtuin sir-2.1, probably through its role in nicotinic acid metabolism. In Caenorhabditis elegans, this protein is Nicotinamide N-methyltransferase.